The sequence spans 171 residues: 3-hydroxydecanoyl-[acyl-carrier-protein] dehydratase (171 aa).

His70 is an active-site residue.

The protein belongs to the thioester dehydratase family. FabA subfamily. In terms of assembly, homodimer.

It is found in the cytoplasm. It carries out the reaction a (3R)-hydroxyacyl-[ACP] = a (2E)-enoyl-[ACP] + H2O. The catalysed reaction is (3R)-hydroxydecanoyl-[ACP] = (2E)-decenoyl-[ACP] + H2O. The enzyme catalyses (2E)-decenoyl-[ACP] = (3Z)-decenoyl-[ACP]. It participates in lipid metabolism; fatty acid biosynthesis. Necessary for the introduction of cis unsaturation into fatty acids. Catalyzes the dehydration of (3R)-3-hydroxydecanoyl-ACP to E-(2)-decenoyl-ACP and then its isomerization to Z-(3)-decenoyl-ACP. Can catalyze the dehydratase reaction for beta-hydroxyacyl-ACPs with saturated chain lengths up to 16:0, being most active on intermediate chain length. The polypeptide is 3-hydroxydecanoyl-[acyl-carrier-protein] dehydratase (Pseudomonas putida (strain GB-1)).